We begin with the raw amino-acid sequence, 231 residues long: Aldehyde decarbonylase (231 aa).

Glutamate 32, glutamate 60, histidine 63, glutamate 115, and histidine 147 together coordinate Fe cation.

Belongs to the aldehyde decarbonylase family. Binds 2 metal cations per subunit. The catalytic dinuclear metal-binding site could be either a di-iron or a manganese-iron cofactor. serves as cofactor.

The catalysed reaction is a long-chain fatty aldehyde + 2 NADPH + O2 + H(+) = a long-chain alkane + formate + 2 NADP(+) + H2O. Functionally, catalyzes the decarbonylation of fatty aldehydes to alkanes. Requires the presence of ferredoxin, ferredoxin reductase and NADPH for in vitro decarbonylase activity. Involved in the biosynthesis of alkanes, mainly heptadecane and pentadecane. In Synechocystis sp. (strain ATCC 27184 / PCC 6803 / Kazusa), this protein is Aldehyde decarbonylase.